Here is a 597-residue protein sequence, read N- to C-terminus: Pheromone-processing carboxypeptidase KEX1 (597 aa).

The signal sequence occupies residues 1 to 18 (MVTRHVLAAALAGSMTSA). Over 19 to 508 (QRLHPTSQRA…QTGANSSQVH (490 aa)) the chain is Lumenal. Active-site residues include Ser-186 and Asp-377. Residues Asn-395 and Asn-425 are each glycosylated (N-linked (GlcNAc...) asparagine). His-436 is an active-site residue. 2 N-linked (GlcNAc...) asparagine glycosylation sites follow: Asn-472 and Asn-503. The chain crosses the membrane as a helical span at residues 509-529 (IGIAWLWVALVIAVVSSVLAV). The Cytoplasmic portion of the chain corresponds to 530–597 (CVTIVCIRNK…TSPRSRVTEV (68 aa)).

This sequence belongs to the peptidase S10 family.

It is found in the golgi apparatus. Its subcellular location is the trans-Golgi network membrane. The enzyme catalyses Preferential release of a C-terminal arginine or lysine residue.. Its function is as follows. Protease with a carboxypeptidase B-like function involved in the C-terminal processing of the lysine and arginine residues from protein precursors. Promotes cell fusion and is involved in the programmed cell death. This Phytophthora infestans (strain T30-4) (Potato late blight agent) protein is Pheromone-processing carboxypeptidase KEX1 (KEX1).